The following is a 430-amino-acid chain: Enolase (430 aa).

Position 167 (glutamine 167) interacts with (2R)-2-phosphoglycerate. Catalysis depends on glutamate 209, which acts as the Proton donor. Aspartate 246, glutamate 287, and aspartate 314 together coordinate Mg(2+). Lysine 339, arginine 368, serine 369, and lysine 390 together coordinate (2R)-2-phosphoglycerate. The active-site Proton acceptor is lysine 339.

This sequence belongs to the enolase family. The cofactor is Mg(2+).

It localises to the cytoplasm. Its subcellular location is the secreted. It is found in the cell surface. It carries out the reaction (2R)-2-phosphoglycerate = phosphoenolpyruvate + H2O. Its pathway is carbohydrate degradation; glycolysis; pyruvate from D-glyceraldehyde 3-phosphate: step 4/5. In terms of biological role, catalyzes the reversible conversion of 2-phosphoglycerate (2-PG) into phosphoenolpyruvate (PEP). It is essential for the degradation of carbohydrates via glycolysis. The chain is Enolase from Prochlorococcus marinus (strain MIT 9515).